A 643-amino-acid chain; its full sequence is Mediator of RNA polymerase II transcription subunit 17 (643 aa).

The segment at 53–82 (SDSEEDGAERARAGREQWKQEPEEDEGQLK) is disordered. Residues 60–73 (AERARAGREQWKQE) are compositionally biased toward basic and acidic residues.

It belongs to the Mediator complex subunit 17 family. In terms of assembly, component of the Mediator complex.

The protein resides in the nucleus. In terms of biological role, component of the Mediator complex, a coactivator involved in the regulated transcription of nearly all RNA polymerase II-dependent genes. Mediator functions as a bridge to convey information from gene-specific regulatory proteins to the basal RNA polymerase II transcription machinery. Mediator is recruited to promoters by direct interactions with regulatory proteins and serves as a scaffold for the assembly of a functional preinitiation complex with RNA polymerase II and the general transcription factors. This chain is Mediator of RNA polymerase II transcription subunit 17 (med17), found in Danio rerio (Zebrafish).